A 3535-amino-acid chain; its full sequence is Lysosomal-trafficking regulator (3535 aa).

Positions 412–436 are disordered; that stretch reads MESSASTAMPKQQQHPRHKRQRSSQ. One copy of the WD 1 repeat lies at 689-736; sequence TLSRRLIQLQLNSSDRASQLFQALLYKCSKHSRAKFWLDESSTPAKLE. Positions 1066–1096 are enriched in polar residues; the sequence is STHQEPTGVVNSPSGDSQQPRPRARSFNSGS. Disordered regions lie at residues 1066 to 1132 and 1592 to 1613; these read STHQ…NAGV and GEGQPTGRSPGSSSSSRSTLDG. Residues 1596-1610 show a composition bias toward low complexity; the sequence is PTGRSPGSSSSSRST. Residues 2686–2784 form the BEACH-type PH domain; it reads SLNSQILYNF…MREVFCDKIV (99 aa). The BEACH domain maps to 2784–3081; sequence VATPDQSKVI…QLFKSPHPAS (298 aa). Positions 3254 to 3287 are disordered; sequence GIGGGGSERVDEAGNLHPTSSASSVNSSSISSGG. A compositionally biased stretch (low complexity) spans 3273 to 3285; it reads SSASSVNSSSISS. WD repeat units follow at residues 3307-3346, 3442-3486, and 3489-3527; these read RHTDEITCITLSVEFKIAVTAGRDGIAVIWDLNDWSYVRT, VHED…FVSE, and TGTSPIRSICYSTHQHLVVLTRESHIQVWESEGLYGNAP.

As to quaternary structure, interacts with Rab5; the interaction is independent of GDP or GTP. Interacts with msps.

It localises to the vesicle. Its subcellular location is the cytoplasm. The protein resides in the cytoskeleton. The protein localises to the spindle. It is found in the spindle pole. Its function is as follows. Adapter protein that regulates intracellular membrane fusion reactions. Regulates the fusion of lysosome-related organelles. Promotes microtubules nucleation and centrosomal recruitment of microtubule nucleating proteins such as msps. In syncytial embryos, during the formation of yolk granules, suppresses vesicle fusion events with lipid droplets, possibly via interaction with Rab5. In the eye, regulates pigment granules size. In hemocytes, required for the late steps of bacteria phagocytosis. In fat body, required for autophagosome maturation. This Drosophila melanogaster (Fruit fly) protein is Lysosomal-trafficking regulator.